Reading from the N-terminus, the 222-residue chain is Small ribosomal subunit protein uS7m (222 aa).

A mitochondrion-targeting transit peptide spans 1-14 (MTTKLARFAQKRWI).

Belongs to the universal ribosomal protein uS7 family. Component of the mitochondrial ribosome small subunit (28S) which comprises a 12S rRNA and about 30 distinct proteins.

The protein localises to the mitochondrion. The protein is Small ribosomal subunit protein uS7m (mrps-7) of Caenorhabditis elegans.